The sequence spans 269 residues: 3-ketodihydrosphingosine reductase (269 aa).

NADPH-binding residues include Gly10, Ser12, Ser13, Gly14, Lys36, and Asp50. A GXSXG motif is present at residues 10 to 14 (GASSG). The active-site Nucleophile; for lipase activity is Ser12. Ser128 (proton donor) is an active-site residue. Tyr142 (proton acceptor) is an active-site residue. NADP(+) contacts are provided by Tyr142 and Lys146. NADPH-binding positions include 142 to 146 (YSASK) and 175 to 177 (FNT). Lys146 is a catalytic residue. Residue Lys146 is the Lowers pKa of active site Tyr of the active site.

The protein belongs to the short-chain dehydrogenases/reductases (SDR) family.

It carries out the reaction sphinganine + NADP(+) = 3-oxosphinganine + NADPH + H(+). It functions in the pathway lipid metabolism; sphingolipid metabolism. Its function is as follows. Catalyzes the reduction of 3'-oxosphinganine (3-ketodihydrosphingosine/KDS) to sphinganine (dihydrosphingosine/DHS), the second step of de novo sphingolipid biosynthesis. The protein is 3-ketodihydrosphingosine reductase of Bacteroides thetaiotaomicron (strain ATCC 29148 / DSM 2079 / JCM 5827 / CCUG 10774 / NCTC 10582 / VPI-5482 / E50).